The following is a 168-amino-acid chain: Protein A40 (168 aa).

The Cytoplasmic segment spans residues 1 to 9 (MNKPKTDYA). The chain crosses the membrane as a helical; Signal-anchor for type II membrane protein span at residues 10 to 30 (GYACCVICGLIVGIIFTATLL). Residues 31–168 (KVVERKLVHT…TTFLSYHYFG (138 aa)) lie on the Extracellular side of the membrane. In terms of domain architecture, C-type lectin spans 63–168 (YNNKCIHLST…TTFLSYHYFG (106 aa)).

Belongs to the poxviridae A40 protein family.

Its subcellular location is the host membrane. The polypeptide is Protein A40 (Homo sapiens (Human)).